Reading from the N-terminus, the 128-residue chain is MAKYTNEELIEAFKEMTLVELTEFKNLFEETFDVTAAAPVAVAAAGAAGGEAAAEEEKDEFDVVLEDAGAKKIGVIKVVREVVSGLGLKEAKDLVESAPKAILEGASKDDAEAAKTKLEEAGAKVSLK.

Belongs to the bacterial ribosomal protein bL12 family. As to quaternary structure, homodimer. Part of the ribosomal stalk of the 50S ribosomal subunit. Forms a multimeric L10(L12)X complex, where L10 forms an elongated spine to which 2 to 4 L12 dimers bind in a sequential fashion. Binds GTP-bound translation factors.

In terms of biological role, forms part of the ribosomal stalk which helps the ribosome interact with GTP-bound translation factors. Is thus essential for accurate translation. The chain is Large ribosomal subunit protein bL12 from Corynebacterium kroppenstedtii (strain DSM 44385 / JCM 11950 / CIP 105744 / CCUG 35717).